Reading from the N-terminus, the 192-residue chain is Ras-like GTP-binding protein rhoA (192 aa).

GTP is bound at residue 12–19 (GDGACGKT). An Effector region motif is present at residues 34-42 (YVPTVFENY). Residues 59-63 (DTAGQ) and 117-120 (NKRD) contribute to the GTP site. At Cys189 the chain carries Cysteine methyl ester. Cys189 carries the S-geranylgeranyl cysteine lipid modification. Residues 190 to 192 (MIL) constitute a propeptide, removed in mature form.

This sequence belongs to the small GTPase superfamily. Rho family. As to quaternary structure, may interact with unc-89 (via DN and PH domains). Interacts with bli-3 and memo-1. In terms of tissue distribution, in larvae and adults, enriched at the tip of the head where the anterior sensory organ is located and in the pharyngeal nerve ring (at protein level). In embryos, enriched at the boundaries of dorsal cells undergoing intercalation, ventral enclosure and elongation.

The protein localises to the cell membrane. It localises to the cytoplasm. It is found in the cytoskeleton. Its subcellular location is the cell cortex. Its activity is regulated as follows. GTP hydrolysis is stimulated by unc-89. Functionally, required for ventral migration of epidermal cells during ventral enclosure in the embryo and for cell elongation. Also required for ventral migration of P cells during larval development. Involved in asymmetric spindle positioning during anaphase and establishment of cell polarity during embryo development. In adults, involved in regulation of multiple processes including locomotion, pharyngeal pumping, fecundity, ovulation, defecation and body morphology. In body wall muscles, regulates organization of myosin thick filaments downstream of unc-89. Association with the oxidase bli-3 promotes ROS production and this interaction may be modulated by memo-1, in order to control the oxidative stress response and longevity. This is Ras-like GTP-binding protein rhoA from Caenorhabditis elegans.